Consider the following 258-residue polypeptide: Acyl-[acyl-carrier-protein]--UDP-N-acetylglucosamine O-acyltransferase (258 aa).

The protein belongs to the transferase hexapeptide repeat family. LpxA subfamily. In terms of assembly, homotrimer.

Its subcellular location is the cytoplasm. It carries out the reaction a (3R)-hydroxyacyl-[ACP] + UDP-N-acetyl-alpha-D-glucosamine = a UDP-3-O-[(3R)-3-hydroxyacyl]-N-acetyl-alpha-D-glucosamine + holo-[ACP]. Its pathway is glycolipid biosynthesis; lipid IV(A) biosynthesis; lipid IV(A) from (3R)-3-hydroxytetradecanoyl-[acyl-carrier-protein] and UDP-N-acetyl-alpha-D-glucosamine: step 1/6. Involved in the biosynthesis of lipid A, a phosphorylated glycolipid that anchors the lipopolysaccharide to the outer membrane of the cell. This chain is Acyl-[acyl-carrier-protein]--UDP-N-acetylglucosamine O-acyltransferase, found in Thiobacillus denitrificans (strain ATCC 25259 / T1).